We begin with the raw amino-acid sequence, 650 residues long: Acetyl-coenzyme A synthetase (650 aa).

CoA is bound by residues 191–194 (RAGR), T311, and N335. Residues 387–389 (GEP), 411–416 (DTWWQT), D500, and R515 each bind ATP. Residue S523 coordinates CoA. R526 is an ATP binding site. V537, H539, and V542 together coordinate Mg(2+). R584 lines the CoA pocket. At K609 the chain carries N6-acetyllysine.

It belongs to the ATP-dependent AMP-binding enzyme family. Mg(2+) serves as cofactor. Post-translationally, acetylated. Deacetylation by the SIR2-homolog deacetylase activates the enzyme.

The catalysed reaction is acetate + ATP + CoA = acetyl-CoA + AMP + diphosphate. Catalyzes the conversion of acetate into acetyl-CoA (AcCoA), an essential intermediate at the junction of anabolic and catabolic pathways. AcsA undergoes a two-step reaction. In the first half reaction, AcsA combines acetate with ATP to form acetyl-adenylate (AcAMP) intermediate. In the second half reaction, it can then transfer the acetyl group from AcAMP to the sulfhydryl group of CoA, forming the product AcCoA. This is Acetyl-coenzyme A synthetase from Shewanella halifaxensis (strain HAW-EB4).